The following is a 3563-amino-acid chain: D-lysergyl-peptide-synthetase subunit 1 (3563 aa).

Positions 307-706 are adenylation (A) domain 1; the sequence is SCSPRPNPQA…LGRKDDQVKI (400 aa). The Carrier 1 domain maps to 844-921; sequence EPKSDREKLL…EIVIVSTSAT (78 aa). At serine 881 the chain carries O-(pantetheine 4'-phosphoryl)serine. The condensation (C) domain 1 stretch occupies residues 963 to 1354; the sequence is EDIYPCTHLQ…EHILTEIHSN (392 aa). An adenylation (A) domain 2 region spans residues 1397-1804; the sequence is QEKCQAQPDA…RRKDAQVKIR (408 aa). Residues 1944–2020 enclose the Carrier 2 domain; that stretch reads PPSNATEHEI…KLALARGVTQ (77 aa). Residue serine 1981 is modified to O-(pantetheine 4'-phosphoryl)serine. Residues 2067–2486 form a condensation (C) domain 2 region; it reads ERIYPCSPIQ…ALPVLDEDQM (420 aa). An adenylation (A) domain 3 region spans residues 2511-2909; sequence QCIRCPDSPS…GRNDDQVKVR (399 aa). Positions 3025–3104 constitute a Carrier 3 domain; sequence PPRTALEAEL…RFGSYRRAGA (80 aa). Position 3064 is an O-(pantetheine 4'-phosphoryl)serine (serine 3064). Residues 3166–3451 are cyclization (Cyc) domain; that stretch reads LYFSKPMASE…VAKSTTWSSD (286 aa).

It belongs to the NRP synthetase family.

It participates in alkaloid biosynthesis; ergot alkaloid biosynthesis. In terms of biological role, D-lysergyl-peptide-synthetase subunit 1; part of the gene cluster that mediates the biosynthesis of fungal ergot alkaloid. DmaW catalyzes the first step of ergot alkaloid biosynthesis by condensing dimethylallyl diphosphate (DMAP) and tryptophan to form 4-dimethylallyl-L-tryptophan. The second step is catalyzed by the methyltransferase easF that methylates 4-dimethylallyl-L-tryptophan in the presence of S-adenosyl-L-methionine, resulting in the formation of 4-dimethylallyl-L-abrine. The catalase easC and the FAD-dependent oxidoreductase easE then transform 4-dimethylallyl-L-abrine to chanoclavine-I which is further oxidized by easD in the presence of NAD(+), resulting in the formation of chanoclavine-I aldehyde. Agroclavine dehydrogenase easG then mediates the conversion of chanoclavine-I aldehyde to agroclavine via a non-enzymatic adduct reaction: the substrate is an iminium intermediate that is formed spontaneously from chanoclavine-I aldehyde in the presence of glutathione. The presence of easA is not required to complete this reaction. Further conversion of agroclavine to paspalic acid is a two-step process involving oxidation of agroclavine to elymoclavine and of elymoclavine to paspalic acid, the second step being performed by the elymoclavine oxidase cloA. Paspalic acid is then further converted to D-lysergic acid. Ergopeptines are assembled from D-lysergic acid and three different amino acids by the D-lysergyl-peptide-synthetases composed each of a monomudular and a trimodular nonribosomal peptide synthetase subunit. LpsB and lpsC encode the monomodular subunits responsible for D-lysergic acid activation and incorporation into the ergopeptine backbone. LpsA1 and A2 subunits encode the trimodular nonribosomal peptide synthetase assembling the tripeptide portion of ergopeptines. LpsA1 is responsible for formation of the major ergopeptine, ergotamine, and lpsA2 for alpha-ergocryptine, the minor ergopeptine of the total alkaloid mixture elaborated by C.purpurea. D-lysergyl-tripeptides are assembled by the nonribosomal peptide synthetases and released as N-(D-lysergyl-aminoacyl)-lactams. Cyclolization of the D-lysergyl-tripeptides is performed by the Fe(2+)/2-ketoglutarate-dependent dioxygenase easH which introduces a hydroxyl group into N-(D-lysergyl-aminoacyl)-lactam at alpha-C of the aminoacyl residue followed by spontaneous condensation with the terminal lactam carbonyl group. The polypeptide is D-lysergyl-peptide-synthetase subunit 1 (Claviceps purpurea (Ergot fungus)).